The primary structure comprises 530 residues: Per os infectivity factor 1 (530 aa).

An N-terminal signal peptide occupies residues 1 to 15 (MHFAIILLFLLVIIA).

Forms the PIF complex together with PIF2 and PIF3. The complex also interacts with per os infectivity factor PIF0.

The protein resides in the virion membrane. Functionally, per os infectivity factor that mediates the specific binding of occluded virions (ODV) to the host midgut target cells. This chain is Per os infectivity factor 1, found in Autographa californica nuclear polyhedrosis virus (AcMNPV).